A 77-amino-acid polypeptide reads, in one-letter code: Cysteine-rich protein 1 (77 aa).

Positions proline 2 to proline 63 constitute an LIM zinc-binding domain. N6-acetyllysine occurs at positions 9 and 22. Arginine 68 carries the omega-N-methylarginine modification.

Its function is as follows. Seems to have a role in zinc absorption and may function as an intracellular zinc transport protein. The sequence is that of Cysteine-rich protein 1 (CRIP1) from Homo sapiens (Human).